The following is a 595-amino-acid chain: Beta-(1--&gt;2)glucan export ATP-binding/permease protein NdvA (595 aa).

Residues 21 to 301 (SLLICAANVM…MSNFINLTVS (281 aa)) enclose the ABC transmembrane type-1 domain. 5 consecutive transmembrane segments (helical) span residues 22–42 (LLIC…PILF), 55–75 (IILT…AYVL), 128–148 (AIWL…FILI), 152–172 (FNMN…YVLI), and 248–268 (TAST…VAKG). The 235-residue stretch at 335–569 (VQFHHVTYKF…GGRFYKLLKA (235 aa)) folds into the ABC transporter domain. Residue 368 to 375 (GPTGAGKT) participates in ATP binding.

The protein belongs to the ABC transporter superfamily. Beta-(1--&gt;2)glucan exporter (TC 3.A.1.108.1) family. As to quaternary structure, homodimer.

Its subcellular location is the cell inner membrane. The enzyme catalyses [(1-&gt;2)-beta-D-glucosyl](n)(in) + ATP + H2O = [(1-&gt;2)-beta-D-glucosyl](n)(out) + ADP + phosphate + H(+). Involved in beta-(1--&gt;2)glucan export. Transmembrane domains (TMD) form a pore in the inner membrane and the ATP-binding domain (NBD) is responsible for energy generation. This is Beta-(1--&gt;2)glucan export ATP-binding/permease protein NdvA from Bartonella quintana (strain Toulouse) (Rochalimaea quintana).